We begin with the raw amino-acid sequence, 224 residues long: Glutathione S-transferase Mu 5 (224 aa).

Residues 4–91 (KSMVLGYWDI…YIARKHNMCG (88 aa)) form the GST N-terminal domain. Ser-5 carries the phosphoserine modification. Glutathione contacts are provided by residues 10–11 (YW), 49–53 (WLDVK), 62–63 (NL), and 75–76 (QS). Residues 93 to 211 (TEEEKIRVDI…QSDRFFKMPI (119 aa)) form the GST C-terminal domain. Tyr-119 is a substrate binding site.

Belongs to the GST superfamily. Mu family. As to quaternary structure, homodimer. Interacts with PFKM isoform 2 and isoform 3 (via N-terminal testis-specific region).

Its subcellular location is the cytoplasm. The catalysed reaction is RX + glutathione = an S-substituted glutathione + a halide anion + H(+). Its function is as follows. Conjugation of reduced glutathione to a wide number of exogenous and endogenous hydrophobic electrophiles. In Mus musculus (Mouse), this protein is Glutathione S-transferase Mu 5 (Gstm5).